Reading from the N-terminus, the 733-residue chain is Non-secreted LysM effector LCP1 (733 aa).

The signal sequence occupies residues 1 to 22 (MMRRPWLLSALVAWVKLPSVQG). LysM domains lie at 211–256 (SEYT…KLCI) and 261–309 (DVYV…TICI). N-linked (GlcNAc...) asparagine glycans are attached at residues Asn298, Asn304, Asn340, Asn350, Asn381, Asn432, Asn442, Asn455, and Asn538. In terms of domain architecture, LysM 3 spans 347–393 (LFHNVTAGDDCGTIGLKYSISLDDFIFLNSMIWPNCTNLWLRASYCV). Low complexity predominate over residues 605-629 (SPITSSAPTSTTASSKTSSSAAQPT). The interval 605 to 637 (SPITSSAPTSTTASSKTSSSAAQPTNVSTDGTC) is disordered. Asn630 carries N-linked (GlcNAc...) asparagine glycosylation. Chitin-binding type-1 domains lie at 634-680 (DGTC…KCDA) and 688-733 (DGTC…GVCT). Cystine bridges form between Cys637–Cys654, Cys645–Cys660, Cys653–Cys667, Cys671–Cys678, Cys691–Cys708, Cys699–Cys714, Cys707–Cys721, and Cys725–Cys732.

It belongs to the secreted LysM effector family.

The protein resides in the secreted. It localises to the cell membrane. Its subcellular location is the vacuole. Its function is as follows. Secreted effector that enables the plant pathogenic fungus to manipulate host defenses for successful infection. Not involved in host recognition and penetration but suppresses host cell death and promotes fumonisin biosynthesis while the pathogen colonizes maize kernels. The polypeptide is Non-secreted LysM effector LCP1 (Gibberella moniliformis (strain M3125 / FGSC 7600) (Maize ear and stalk rot fungus)).